The following is a 313-amino-acid chain: tRNA uridine(34) hydroxylase (313 aa).

Positions 124–218 (SDPEVLLIDT…YLEEVPQEET (95 aa)) constitute a Rhodanese domain. Catalysis depends on Cys-178, which acts as the Cysteine persulfide intermediate.

It belongs to the TrhO family.

The enzyme catalyses uridine(34) in tRNA + AH2 + O2 = 5-hydroxyuridine(34) in tRNA + A + H2O. Functionally, catalyzes oxygen-dependent 5-hydroxyuridine (ho5U) modification at position 34 in tRNAs. This Pseudomonas fluorescens (strain SBW25) protein is tRNA uridine(34) hydroxylase.